The following is a 297-amino-acid chain: Homoserine kinase (297 aa).

An ATP-binding site is contributed by 79 to 89; sequence PIARGLGSSGA.

Belongs to the GHMP kinase family. Homoserine kinase subfamily.

It localises to the cytoplasm. The enzyme catalyses L-homoserine + ATP = O-phospho-L-homoserine + ADP + H(+). Its pathway is amino-acid biosynthesis; L-threonine biosynthesis; L-threonine from L-aspartate: step 4/5. Functionally, catalyzes the ATP-dependent phosphorylation of L-homoserine to L-homoserine phosphate. The protein is Homoserine kinase of Pyrobaculum aerophilum (strain ATCC 51768 / DSM 7523 / JCM 9630 / CIP 104966 / NBRC 100827 / IM2).